A 276-amino-acid chain; its full sequence is Diaminopimelate epimerase (276 aa).

Substrate contacts are provided by Asn-13, Gln-46, and Asn-66. Cys-75 serves as the catalytic Proton donor. Substrate contacts are provided by residues 76–77, Asn-159, Asn-192, and 210–211; these read GN and ER. The active-site Proton acceptor is Cys-219. Residue 220–221 participates in substrate binding; it reads GS.

It belongs to the diaminopimelate epimerase family. Homodimer.

The protein localises to the cytoplasm. The catalysed reaction is (2S,6S)-2,6-diaminopimelate = meso-2,6-diaminopimelate. It functions in the pathway amino-acid biosynthesis; L-lysine biosynthesis via DAP pathway; DL-2,6-diaminopimelate from LL-2,6-diaminopimelate: step 1/1. In terms of biological role, catalyzes the stereoinversion of LL-2,6-diaminopimelate (L,L-DAP) to meso-diaminopimelate (meso-DAP), a precursor of L-lysine and an essential component of the bacterial peptidoglycan. In Vibrio atlanticus (strain LGP32) (Vibrio splendidus (strain Mel32)), this protein is Diaminopimelate epimerase.